The following is a 313-amino-acid chain: Probable GTP 3',8-cyclase (313 aa).

One can recognise a Radical SAM core domain in the interval Val-4–Arg-224. Arg-13 provides a ligand contact to GTP. 3 residues coordinate [4Fe-4S] cluster: Cys-20, Cys-24, and Cys-27. Residue Lys-60 coordinates GTP. An S-adenosyl-L-methionine-binding site is contributed by Gly-64. A GTP-binding site is contributed by Thr-90. S-adenosyl-L-methionine is bound at residue Ser-114. GTP is bound at residue Lys-151. 2 residues coordinate [4Fe-4S] cluster: Cys-244 and Cys-247. Residue Arg-249–Arg-251 coordinates GTP. Cys-261 serves as a coordination point for [4Fe-4S] cluster.

The protein belongs to the radical SAM superfamily. MoaA family. [4Fe-4S] cluster is required as a cofactor.

The catalysed reaction is GTP + AH2 + S-adenosyl-L-methionine = (8S)-3',8-cyclo-7,8-dihydroguanosine 5'-triphosphate + 5'-deoxyadenosine + L-methionine + A + H(+). It participates in cofactor biosynthesis; molybdopterin biosynthesis. Catalyzes the cyclization of GTP to (8S)-3',8-cyclo-7,8-dihydroguanosine 5'-triphosphate. This chain is Probable GTP 3',8-cyclase, found in Sulfolobus acidocaldarius (strain ATCC 33909 / DSM 639 / JCM 8929 / NBRC 15157 / NCIMB 11770).